Reading from the N-terminus, the 133-residue chain is Small ribosomal subunit protein uS8 (133 aa).

Residues 1-28 (MANHDPISDMLTRIRNASEKRHEKTKVP) form a disordered region. Residues 16 to 26 (NASEKRHEKTK) show a composition bias toward basic and acidic residues.

It belongs to the universal ribosomal protein uS8 family. As to quaternary structure, part of the 30S ribosomal subunit. Contacts proteins S5 and S12.

Functionally, one of the primary rRNA binding proteins, it binds directly to 16S rRNA central domain where it helps coordinate assembly of the platform of the 30S subunit. In Prochlorococcus marinus (strain NATL2A), this protein is Small ribosomal subunit protein uS8.